The chain runs to 368 residues: 4-hydroxy-3-methylbut-2-en-1-yl diphosphate synthase (flavodoxin) (368 aa).

[4Fe-4S] cluster contacts are provided by C271, C274, C306, and E313.

The protein belongs to the IspG family. [4Fe-4S] cluster serves as cofactor.

It carries out the reaction (2E)-4-hydroxy-3-methylbut-2-enyl diphosphate + oxidized [flavodoxin] + H2O + 2 H(+) = 2-C-methyl-D-erythritol 2,4-cyclic diphosphate + reduced [flavodoxin]. The protein operates within isoprenoid biosynthesis; isopentenyl diphosphate biosynthesis via DXP pathway; isopentenyl diphosphate from 1-deoxy-D-xylulose 5-phosphate: step 5/6. Functionally, converts 2C-methyl-D-erythritol 2,4-cyclodiphosphate (ME-2,4cPP) into 1-hydroxy-2-methyl-2-(E)-butenyl 4-diphosphate. The polypeptide is 4-hydroxy-3-methylbut-2-en-1-yl diphosphate synthase (flavodoxin) (Haemophilus influenzae (strain 86-028NP)).